The primary structure comprises 515 residues: Maturase K (515 aa).

Belongs to the intron maturase 2 family. MatK subfamily.

It localises to the plastid. Its subcellular location is the chloroplast. In terms of biological role, usually encoded in the trnK tRNA gene intron. Probably assists in splicing its own and other chloroplast group II introns. The sequence is that of Maturase K from Pinus sibirica (Siberian pine).